An 854-amino-acid polypeptide reads, in one-letter code: DNA topoisomerase 1 type prokaryotic (854 aa).

A Toprim domain is found at 2–110 (SILILLESPG…KRLRFNAITK (109 aa)). Residues Glu-8 and Asp-79 each contribute to the Mg(2+) site. Residues 124 to 610 (DKNLVDAQKA…DFYDKLKPIV (487 aa)) form the Topo IA-type catalytic domain. Residues 158–163 (SAGRVQ) are interaction with DNA. Tyr-302 acts as the O-(5'-phospho-DNA)-tyrosine intermediate in catalysis. A disordered region spans residues 802 to 854 (KSAPKGGSKTIRKPSQTKYSQTKSTKSTKSTKSTNKKFVGKSAKKTTKKTTKK). Positions 814 to 834 (KPSQTKYSQTKSTKSTKSTKS) are enriched in low complexity. Positions 835–854 (TNKKFVGKSAKKTTKKTTKK) are enriched in basic residues.

This sequence belongs to the type IA topoisomerase family. Mg(2+) is required as a cofactor.

The protein localises to the virion. The enzyme catalyses ATP-independent breakage of single-stranded DNA, followed by passage and rejoining.. Functionally, releases the supercoiling and torsional tension of DNA, which is introduced during the DNA replication and transcription, by transiently cleaving and rejoining one strand of the DNA duplex. Introduces a single-strand break via transesterification at a target site in duplex DNA. The scissile phosphodiester is attacked by the catalytic tyrosine of the enzyme, resulting in the formation of a DNA-(5'-phosphotyrosyl)-enzyme intermediate and the expulsion of a 3'-OH DNA strand. The free DNA strand then undergoes passage around the unbroken strand, thus removing DNA supercoils. Finally, in the religation step, the DNA 3'-OH attacks the covalent intermediate to expel the active-site tyrosine and restore the DNA phosphodiester backbone. The polypeptide is DNA topoisomerase 1 type prokaryotic (TOP1P) (Acanthamoeba polyphaga (Amoeba)).